Consider the following 308-residue polypeptide: HPr kinase/phosphorylase (308 aa).

Active-site residues include H138 and K159. Residue 153–160 (GESGLGKS) coordinates ATP. S160 provides a ligand contact to Mg(2+). Catalysis depends on D177, which acts as the Proton acceptor; for phosphorylation activity. Proton donor; for dephosphorylation activity. The tract at residues 201–210 (LEVRGLGLLD) is important for the catalytic mechanism of both phosphorylation and dephosphorylation. Residue E202 participates in Mg(2+) binding. Residue R243 is part of the active site. The important for the catalytic mechanism of dephosphorylation stretch occupies residues 264–269 (QVAAGR).

Belongs to the HPrK/P family. As to quaternary structure, homohexamer. Mg(2+) serves as cofactor.

The catalysed reaction is [HPr protein]-L-serine + ATP = [HPr protein]-O-phospho-L-serine + ADP + H(+). It catalyses the reaction [HPr protein]-O-phospho-L-serine + phosphate + H(+) = [HPr protein]-L-serine + diphosphate. Catalyzes the ATP- as well as the pyrophosphate-dependent phosphorylation of a specific serine residue in HPr, a phosphocarrier protein of the phosphoenolpyruvate-dependent sugar phosphotransferase system (PTS). HprK/P also catalyzes the pyrophosphate-producing, inorganic phosphate-dependent dephosphorylation (phosphorolysis) of seryl-phosphorylated HPr (P-Ser-HPr). This is HPr kinase/phosphorylase from Bordetella petrii (strain ATCC BAA-461 / DSM 12804 / CCUG 43448).